A 274-amino-acid polypeptide reads, in one-letter code: Thiamine kinase (274 aa).

It belongs to the thiamine kinase family.

It catalyses the reaction thiamine + ATP = thiamine phosphate + ADP + H(+). It participates in cofactor biosynthesis; thiamine diphosphate biosynthesis; thiamine phosphate from thiamine: step 1/1. Its function is as follows. Catalyzes the ATP-dependent phosphorylation of thiamine to thiamine phosphate. Is involved in thiamine salvage. This Salmonella newport (strain SL254) protein is Thiamine kinase.